An 898-amino-acid chain; its full sequence is DNA-directed DNA polymerase (898 aa).

Residues 101–337 (YDRKFVRVAN…VQAIDKIRGF (237 aa)) are 3'-5'exonuclease. Mg(2+) contacts are provided by aspartate 112, glutamate 114, and aspartate 219. The interval 245–261 (VKSKLIQNMYGSKEIYS) is beta hairpin. Aspartate 324, aspartate 408, and leucine 409 together coordinate Mg(2+). Residues 377–898 (IPQQGSHVKQ…EKASLDFLFG (522 aa)) are polymerase. Residues 411 to 413 (SLY), arginine 479, and lysine 557 each bind substrate. A Mg(2+)-binding site is contributed by aspartate 620. Residues 702-705 (KKRY) are binding of DNA in B-conformation. Positions 893 to 898 (LDFLFG) are interaction with the polymerase clamp.

Belongs to the DNA polymerase type-B family. As to quaternary structure, interacts with the polymerase clamp; this interaction constitutes the polymerase holoenzyme. Interacts with the helicase assembly factor. Part of the replicase complex that includes the DNA polymerase, the polymerase clamp, the clamp loader complex, the single-stranded DNA binding protein, the primase, the helicase and the helicase assembly factor. It depends on Mg(2+) as a cofactor.

The enzyme catalyses DNA(n) + a 2'-deoxyribonucleoside 5'-triphosphate = DNA(n+1) + diphosphate. In terms of biological role, replicates the viral genomic DNA. This polymerase possesses two enzymatic activities: DNA synthesis (polymerase) and an exonucleolytic activity that degrades single-stranded DNA in the 3'- to 5'-direction for proofreading purpose. In Enterobacteria phage T4 (Bacteriophage T4), this protein is DNA-directed DNA polymerase (43).